Consider the following 85-residue polypeptide: U4-theraphotoxin-Hhn1p (85 aa).

The signal sequence occupies residues Met-1–Ala-22. A propeptide spanning residues Glu-23 to Arg-48 is cleaved from the precursor. 3 disulfides stabilise this stretch: Cys-52-Cys-66, Cys-56-Cys-77, and Cys-71-Cys-82.

It belongs to the neurotoxin 12 (Hwtx-2) family. 02 (Hwtx-2) subfamily. In terms of tissue distribution, expressed by the venom gland.

The protein localises to the secreted. In terms of biological role, postsynaptic neurotoxin. This is U4-theraphotoxin-Hhn1p from Cyriopagopus hainanus (Chinese bird spider).